The sequence spans 284 residues: Pantothenate synthetase (284 aa).

Met-30 to His-37 is a binding site for ATP. His-37 functions as the Proton donor in the catalytic mechanism. Gln-61 provides a ligand contact to (R)-pantoate. Gln-61 is a beta-alanine binding site. Gly-149–Asp-152 is a binding site for ATP. Gln-155 contacts (R)-pantoate. Residues Val-178 and Leu-186–Arg-189 each bind ATP.

The protein belongs to the pantothenate synthetase family. As to quaternary structure, homodimer.

Its subcellular location is the cytoplasm. The catalysed reaction is (R)-pantoate + beta-alanine + ATP = (R)-pantothenate + AMP + diphosphate + H(+). Its pathway is cofactor biosynthesis; (R)-pantothenate biosynthesis; (R)-pantothenate from (R)-pantoate and beta-alanine: step 1/1. Its function is as follows. Catalyzes the condensation of pantoate with beta-alanine in an ATP-dependent reaction via a pantoyl-adenylate intermediate. In Erwinia tasmaniensis (strain DSM 17950 / CFBP 7177 / CIP 109463 / NCPPB 4357 / Et1/99), this protein is Pantothenate synthetase.